A 400-amino-acid chain; its full sequence is Lysophospholipid transporter LplT (400 aa).

12 helical membrane passes run 19 to 39, 53 to 73, 91 to 111, 139 to 159, 164 to 184, 195 to 213, 227 to 247, 257 to 277, 281 to 301, 304 to 324, 352 to 372, and 373 to 393; these read VIVAQFLSAFGDNALLFATLA, VLQMVFVGAYILFAPFVGQMA, AGAAGICLGVNPFVGYTLVGI, LMEASTIAAILLGSVAGGVLA, IAALVACALAYAGAVAANLFI, SWRLSAMTRSFFSACVVLW, LFWGAGVTLRFLLVLWVPVAL, YLNAMVAVGIVVGAGAAAKLV, TVSRCMPAGILIGVVVAIFSL, ALLPAYALLLLIGMLGGFFVV, NSAMLLMLGLYSLAVLVGVPA, and VAIGIGFGVLFALAIAALWIW.

It belongs to the major facilitator superfamily. LplT (TC 2.A.1.42) family.

Its subcellular location is the cell inner membrane. Catalyzes the facilitated diffusion of 2-acyl-glycero-3-phosphoethanolamine (2-acyl-GPE) into the cell. In Salmonella enteritidis PT4 (strain P125109), this protein is Lysophospholipid transporter LplT.